A 445-amino-acid chain; its full sequence is Putative ubiquitin carboxyl-terminal hydrolase L293 (445 aa).

The region spanning 133–441 (KALANFGNSC…SAYIILYGDI (309 aa)) is the USP domain. The Nucleophile role is filled by Cys-142. The active-site Proton acceptor is His-384.

This sequence belongs to the peptidase C19 family.

The protein localises to the virion. It catalyses the reaction Thiol-dependent hydrolysis of ester, thioester, amide, peptide and isopeptide bonds formed by the C-terminal Gly of ubiquitin (a 76-residue protein attached to proteins as an intracellular targeting signal).. This is Putative ubiquitin carboxyl-terminal hydrolase L293 from Acanthamoeba polyphaga mimivirus (APMV).